Reading from the N-terminus, the 20-residue chain is Brevinin-1SPd (20 aa).

Cys14 and Cys20 are joined by a disulfide.

As to expression, expressed by the skin glands.

Its subcellular location is the secreted. Functionally, antimicrobial peptide with activity against Gram-negative and Gram-positive bacteria (MIC=13 uM against E.coli, MIC=3 uM against S.aureus) and fungi (MIC=3 uM against C.albicans). Shows hemolytic activity on human erythrocytes (HC(50)=8 uM). This is Brevinin-1SPd from Lithobates septentrionalis (Mink frog).